Here is a 509-residue protein sequence, read N- to C-terminus: Maturase K (509 aa).

It belongs to the intron maturase 2 family. MatK subfamily.

It localises to the plastid. The protein localises to the chloroplast. Usually encoded in the trnK tRNA gene intron. Probably assists in splicing its own and other chloroplast group II introns. The sequence is that of Maturase K from Nicotiana clevelandii (Wild tobacco).